A 268-amino-acid chain; its full sequence is Tryptophan synthase alpha chain (268 aa).

Residues Glu-49 and Asp-60 each act as proton acceptor in the active site.

The protein belongs to the TrpA family. As to quaternary structure, tetramer of two alpha and two beta chains.

It catalyses the reaction (1S,2R)-1-C-(indol-3-yl)glycerol 3-phosphate + L-serine = D-glyceraldehyde 3-phosphate + L-tryptophan + H2O. It functions in the pathway amino-acid biosynthesis; L-tryptophan biosynthesis; L-tryptophan from chorismate: step 5/5. Its function is as follows. The alpha subunit is responsible for the aldol cleavage of indoleglycerol phosphate to indole and glyceraldehyde 3-phosphate. This is Tryptophan synthase alpha chain from Xylella fastidiosa (strain M23).